A 142-amino-acid polypeptide reads, in one-letter code: Large ribosomal subunit protein uL16 (142 aa).

Belongs to the universal ribosomal protein uL16 family. Part of the 50S ribosomal subunit.

Its function is as follows. Binds 23S rRNA and is also seen to make contacts with the A and possibly P site tRNAs. In Fervidobacterium nodosum (strain ATCC 35602 / DSM 5306 / Rt17-B1), this protein is Large ribosomal subunit protein uL16.